We begin with the raw amino-acid sequence, 64 residues long: DNA gyrase inhibitor YacG (64 aa).

Cys-10, Cys-13, Cys-29, and Cys-33 together coordinate Zn(2+).

Belongs to the DNA gyrase inhibitor YacG family. Interacts with GyrB. Zn(2+) serves as cofactor.

Inhibits all the catalytic activities of DNA gyrase by preventing its interaction with DNA. Acts by binding directly to the C-terminal domain of GyrB, which probably disrupts DNA binding by the gyrase. This chain is DNA gyrase inhibitor YacG, found in Pectobacterium atrosepticum (strain SCRI 1043 / ATCC BAA-672) (Erwinia carotovora subsp. atroseptica).